Reading from the N-terminus, the 465-residue chain is MFRQEQPLAEGSFAPMGSLQPDAGNASWNGTEAPGGGARATPYSLQVTLTLVCLAGLLMLLTVFGNVLVIIAVFTSRALKAPQNLFLVSLASADILVATLVIPFSLANEVMGYWYFGKAWCEIYLALDVLFCTSSIVHLCAISLDRYWSITQAIEYNLKRTPRRIKAIIITVWVISAVISFPPLISIEKKGGGGGPQPAEPRCEINDQKWYVISSCIGSFFAPCLIMILVYVRIYQIAKRRTRVPPSRRGPDAVAAPPGGTERRPNGLGPERSAGPGGAEAEPLPTQLNGAPGEPAPAGPRDTDALDLEESSSSDHAERPPGPRRPERGPRGKGKARASQVKPGDSLPRRGPGATGIGTPAAGPGEERVGAAKASRWRGRQNREKRFTFVLAVVIGVFVVCWFPFFFTYTLTAVGCSVPRTLFKFFFWFGYCNSSLNPVIYTIFNHDFRRAFKKILCRGDRKRIV.

Over 1–48 (MFRQEQPLAEGSFAPMGSLQPDAGNASWNGTEAPGGGARATPYSLQVT) the chain is Extracellular. Residues asparagine 25 and asparagine 29 are each glycosylated (N-linked (GlcNAc...) asparagine). A helical membrane pass occupies residues 49–74 (LTLVCLAGLLMLLTVFGNVLVIIAVF). Residues 75–85 (TSRALKAPQNL) lie on the Cytoplasmic side of the membrane. The helical transmembrane segment at 86–111 (FLVSLASADILVATLVIPFSLANEVM) threads the bilayer. The Extracellular portion of the chain corresponds to 112-121 (GYWYFGKAWC). Residues cysteine 121 and cysteine 203 are joined by a disulfide bond. The helical transmembrane segment at 122–144 (EIYLALDVLFCTSSIVHLCAISL) threads the bilayer. Residues 145–166 (DRYWSITQAIEYNLKRTPRRIK) are Cytoplasmic-facing. Residues 167-187 (AIIITVWVISAVISFPPLISI) form a helical membrane-spanning segment. The Extracellular segment spans residues 188–209 (EKKGGGGGPQPAEPRCEINDQK). The chain crosses the membrane as a helical span at residues 210–232 (WYVISSCIGSFFAPCLIMILVYV). The Cytoplasmic segment spans residues 233-389 (RIYQIAKRRT…RQNREKRFTF (157 aa)). Residues 242–368 (TRVPPSRRGP…TPAAGPGEER (127 aa)) form a disordered region. Basic and acidic residues predominate over residues 313–330 (SSDHAERPPGPRRPERGP). The residue at position 346 (serine 346) is a Phosphoserine. An Omega-N-methylarginine modification is found at arginine 368. The helical transmembrane segment at 390–410 (VLAVVIGVFVVCWFPFFFTYT) threads the bilayer. Residues 411 to 424 (LTAVGCSVPRTLFK) lie on the Extracellular side of the membrane. The helical transmembrane segment at 425–444 (FFFWFGYCNSSLNPVIYTIF) threads the bilayer. Over 445-465 (NHDFRRAFKKILCRGDRKRIV) the chain is Cytoplasmic. Cysteine 457 carries S-palmitoyl cysteine lipidation.

The protein belongs to the G-protein coupled receptor 1 family. Adrenergic receptor subfamily. ADRA2A sub-subfamily.

The protein localises to the cell membrane. Alpha-2 adrenergic receptors mediate the catecholamine-induced inhibition of adenylate cyclase through the action of G proteins. The rank order of potency for agonists of this receptor is oxymetazoline &gt; clonidine &gt; epinephrine &gt; norepinephrine &gt; phenylephrine &gt; dopamine &gt; p-synephrine &gt; p-tyramine &gt; serotonin = p-octopamine. For antagonists, the rank order is yohimbine &gt; phentolamine = mianserine &gt; chlorpromazine = spiperone = prazosin &gt; propanolol &gt; alprenolol = pindolol. This chain is Alpha-2A adrenergic receptor, found in Homo sapiens (Human).